Here is a 464-residue protein sequence, read N- to C-terminus: 3-isopropylmalate dehydratase large subunit (464 aa).

[4Fe-4S] cluster contacts are provided by cysteine 337, cysteine 397, and cysteine 400.

It belongs to the aconitase/IPM isomerase family. LeuC type 1 subfamily. Heterodimer of LeuC and LeuD. [4Fe-4S] cluster serves as cofactor.

The catalysed reaction is (2R,3S)-3-isopropylmalate = (2S)-2-isopropylmalate. Its pathway is amino-acid biosynthesis; L-leucine biosynthesis; L-leucine from 3-methyl-2-oxobutanoate: step 2/4. Functionally, catalyzes the isomerization between 2-isopropylmalate and 3-isopropylmalate, via the formation of 2-isopropylmaleate. This Bacillus mycoides (strain KBAB4) (Bacillus weihenstephanensis) protein is 3-isopropylmalate dehydratase large subunit.